We begin with the raw amino-acid sequence, 70 residues long: Turripeptide Lol9.1 (70 aa).

The signal sequence occupies residues 1-20 (MKVYCLLLVLLVGLVSQAHG). One can recognise a Kazal-like domain in the interval 21–70 (KPTKRCLSVCSAEYEPVCGSDGKTYANKCHLMTEACWSPTSITLVHEGKC). Cystine bridges form between Cys26-Cys56, Cys30-Cys49, and Cys38-Cys70.

It belongs to the conopeptide P-like superfamily. In terms of tissue distribution, expressed by the venom duct.

It localises to the secreted. Functionally, acts as a neurotoxin by inhibiting an ion channel. May also act as a serine protease inhibitor, since it possess the kazal serine protease inhibitor signature. The sequence is that of Turripeptide Lol9.1 from Iotyrris olangoensis (Sea snail).